A 581-amino-acid chain; its full sequence is MALRYDGLDELPAACLSPCGPPNPAELYSEERRLALEELLAGGPGAFSAFLRRERLGRFLNPDEVRSILRAAERPGEEGAAAGAEDSFGSSHDCSSGTYFPEQSDLEPPLLELGWPAFYQGAYRGATRVEAHFQPRGAGAGGPYGCKDALRQQLRLAREVIAVVMDVFTDIDIFRDLQEISRKQGVAVYILLDQALLSQFLDMCMDLKVHPEEEKLMTVRTITGNIYYARSGTKIVGKVHEKFTLIDGIRVATGSYSFTWTDGKLNSSNLVILSGQVVEHFDLEFRILYAQSKPISSKLLSSFRISGRFDHLVDQKPLSKELTLGNLLRLRLARLSSTPRKVELGGEEGRAEAVCGASKTSTISEEDYFSSRKDRLEGRRVTDAATQTEPGETPAVSMSDVGTQASAATACTGTQTTVATRVVSSQTVVPTTSATTQTDVDEGVLASPGSQSKEGSPVSKMSVSRSSSLRSSSSLSSQGSVASSIGSQTSFRSTDFATPGPPKYQSTPHFDLCFRDSLRNLNKERQFHFAGIRSRLNHMLAMLSRKTFLTENYLSFNSGSFARSSANLLAVREIMLYPSYQ.

The segment at methionine 1–serine 297 is DUF1669. A disordered region spans residues proline 75 to proline 101. Residues phenylalanine 88–threonine 98 show a composition bias toward polar residues. A Phosphoserine modification is found at serine 296. The interval threonine 338–glutamine 581 is required for interaction with KIF22 and function in chromosome congression. Disordered stretches follow at residues glutamate 366 to valine 401 and glutamine 426 to lysine 503. Positions phenylalanine 369–threonine 382 are enriched in basic and acidic residues. The span at glutamine 426 to threonine 438 shows a compositional bias: low complexity. Phosphoserine is present on serine 456. The span at serine 462 to glutamine 488 shows a compositional bias: low complexity. Residue threonine 507 is modified to Phosphothreonine.

Belongs to the FAM83 family. As to quaternary structure, interacts with FBXW7; promotes FBXW7 degradation. May interact with RAF1. Interacts with KIF22; recruits KIF22 to mitotic spindle microtubules. Interacts (via C-terminus) with DYNLL1. Interacts with HMMR. Directly interacts (via DUF1669) with CSNK1A1 and CSNK1A1L. In terms of processing, phosphorylated during mitosis.

Its subcellular location is the cytoplasm. It is found in the cytoskeleton. It localises to the spindle. The protein localises to the spindle pole. In terms of biological role, through the degradation of FBXW7, may act indirectly on the expression and downstream signaling of MTOR, JUN and MYC. May play also a role in cell proliferation through activation of the ERK1/ERK2 signaling cascade. May also be important for proper chromosome congression and alignment during mitosis through its interaction with KIF22. The chain is Protein FAM83D from Bos taurus (Bovine).